A 153-amino-acid chain; its full sequence is Peptide methionine sulfoxide reductase MsrA (153 aa).

Cys-10 is a catalytic residue.

This sequence belongs to the MsrA Met sulfoxide reductase family.

The enzyme catalyses L-methionyl-[protein] + [thioredoxin]-disulfide + H2O = L-methionyl-(S)-S-oxide-[protein] + [thioredoxin]-dithiol. It carries out the reaction [thioredoxin]-disulfide + L-methionine + H2O = L-methionine (S)-S-oxide + [thioredoxin]-dithiol. In terms of biological role, has an important function as a repair enzyme for proteins that have been inactivated by oxidation. Catalyzes the reversible oxidation-reduction of methionine sulfoxide in proteins to methionine. This chain is Peptide methionine sulfoxide reductase MsrA, found in Methanococcoides burtonii (strain DSM 6242 / NBRC 107633 / OCM 468 / ACE-M).